A 383-amino-acid chain; its full sequence is Protein FAM217B (383 aa).

6 disordered regions span residues 1–70 (MNAG…CQGA), 89–115 (ADED…PPDL), 200–222 (KAKG…KSPG), 232–251 (SKPL…RKKA), 284–325 (QTLE…HIRV), and 338–383 (SCKA…YKLK). The span at 8–43 (NKVQHSKNSSGKRQSKSQVPHASSQPRSSLTAVTQP) shows a compositional bias: polar residues. A compositionally biased stretch (basic and acidic residues) spans 44-56 (TEEKLKESISPEA). Over residues 374–383 (GVKQNTYKLK) the composition is skewed to polar residues.

The protein belongs to the FAM217 family.

The protein is Protein FAM217B (FAM217B) of Homo sapiens (Human).